The primary structure comprises 90 residues: UPF0297 protein Cthe_0151 (90 aa).

Belongs to the UPF0297 family.

This Acetivibrio thermocellus (strain ATCC 27405 / DSM 1237 / JCM 9322 / NBRC 103400 / NCIMB 10682 / NRRL B-4536 / VPI 7372) (Clostridium thermocellum) protein is UPF0297 protein Cthe_0151.